We begin with the raw amino-acid sequence, 340 residues long: Selenide, water dikinase (340 aa).

U17 is a catalytic residue. U17 is a non-standard amino acid (selenocysteine). ATP contacts are provided by residues K20 and 45-47 (NNE). D48 is a Mg(2+) binding site. ATP is bound by residues D65, D88, and 136–138 (GHT). A Mg(2+)-binding site is contributed by D88. D224 contributes to the Mg(2+) binding site.

The protein belongs to the selenophosphate synthase 1 family. Class I subfamily. Homodimer. Mg(2+) is required as a cofactor.

The enzyme catalyses hydrogenselenide + ATP + H2O = selenophosphate + AMP + phosphate + 2 H(+). In terms of biological role, synthesizes selenophosphate from selenide and ATP. The polypeptide is Selenide, water dikinase (Campylobacter jejuni (strain RM1221)).